The sequence spans 465 residues: GTPase Der (465 aa).

2 EngA-type G domains span residues 27-190 and 202-375; these read PVLA…PEAP and RRIA…AGWE. Residues 33-40, 80-84, 142-145, 208-215, 255-259, and 320-323 each bind GTP; these read GRPNVGKS, DTGGW, NKVD, DTAGI, and NKWD. The 83-residue stretch at 376–458 folds into the KH-like domain; that stretch reads TRVPTGRLNA…PIHISVRVRE (83 aa).

Belongs to the TRAFAC class TrmE-Era-EngA-EngB-Septin-like GTPase superfamily. EngA (Der) GTPase family. In terms of assembly, associates with the 50S ribosomal subunit.

Its function is as follows. GTPase that plays an essential role in the late steps of ribosome biogenesis. The polypeptide is GTPase Der (Streptomyces coelicolor (strain ATCC BAA-471 / A3(2) / M145)).